The sequence spans 647 residues: Putative lipase atg15 (647 aa).

Residues 1–18 are Cytoplasmic-facing; it reads MLPSGKRKADAFSCTSAA. Residues 19-39 form a helical; Signal-anchor for type II membrane protein membrane-spanning segment; sequence RVTAKLALSFLALSTTPLVNA. Residues 40–647 are Lumenal-facing; that stretch reads FSYEEPNAQI…EGGEGPVNDL (608 aa). N-linked (GlcNAc...) asparagine glycosylation is found at Asn203, Asn225, Asn283, and Asn307. The active-site Charge relay system is the Ser323. Asn469 is a glycosylation site (N-linked (GlcNAc...) asparagine). Positions 597-626 are disordered; sequence APALPSSVLTPSATATPPEGQPDDSGKRCR.

This sequence belongs to the AB hydrolase superfamily. Lipase family. In terms of assembly, binds to both phosphatidylinositol (PI) and phosphatidylinositol 3,5-bisphosphate (PIP2).

The protein resides in the endosome. Its subcellular location is the multivesicular body membrane. The protein localises to the prevacuolar compartment membrane. The enzyme catalyses a triacylglycerol + H2O = a diacylglycerol + a fatty acid + H(+). Lipase which is essential for lysis of subvacuolar cytoplasm to vacuole targeted bodies and intravacuolar autophagic bodies. Involved in the lysis of intravacuolar multivesicular body (MVB) vesicles. The intravacuolar membrane disintegration by atg15 is critical to life span extension. This is Putative lipase atg15 (atg15) from Neurospora crassa (strain ATCC 24698 / 74-OR23-1A / CBS 708.71 / DSM 1257 / FGSC 987).